Reading from the N-terminus, the 158-residue chain is NADPH-dependent 7-cyano-7-deazaguanine reductase (158 aa).

Cys56 acts as the Thioimide intermediate in catalysis. Asp63 acts as the Proton donor in catalysis. Substrate contacts are provided by residues 78–80 and 97–98; these read LES and HE.

This sequence belongs to the GTP cyclohydrolase I family. QueF type 1 subfamily.

The protein resides in the cytoplasm. The catalysed reaction is 7-aminomethyl-7-carbaguanine + 2 NADP(+) = 7-cyano-7-deazaguanine + 2 NADPH + 3 H(+). It functions in the pathway tRNA modification; tRNA-queuosine biosynthesis. Catalyzes the NADPH-dependent reduction of 7-cyano-7-deazaguanine (preQ0) to 7-aminomethyl-7-deazaguanine (preQ1). This Nitrobacter hamburgensis (strain DSM 10229 / NCIMB 13809 / X14) protein is NADPH-dependent 7-cyano-7-deazaguanine reductase.